Reading from the N-terminus, the 497-residue chain is Serine carboxypeptidase-like 20 (497 aa).

The signal sequence occupies residues 1–29 (MSIITMVWLMKVFVFVTLLSLVFVITESA). Disulfide bonds link cysteine 90–cysteine 386, cysteine 254–cysteine 266, and cysteine 289–cysteine 353. N-linked (GlcNAc...) asparagine glycosylation is found at asparagine 111 and asparagine 146. Serine 186 is an active-site residue. Asparagine 249 is a glycosylation site (N-linked (GlcNAc...) asparagine). Residue asparagine 405 is glycosylated (N-linked (GlcNAc...) asparagine). Residue aspartate 421 is part of the active site. An N-linked (GlcNAc...) asparagine glycan is attached at asparagine 463. Histidine 474 is an active-site residue. Positions 495 to 497 (SKI) match the Microbody targeting signal motif.

The protein belongs to the peptidase S10 family. In terms of tissue distribution, ubiquitous.

The protein resides in the secreted. Probable carboxypeptidase. The protein is Serine carboxypeptidase-like 20 (SCPL20) of Arabidopsis thaliana (Mouse-ear cress).